The chain runs to 103 residues: Large ribosomal subunit protein bL21 (103 aa).

This sequence belongs to the bacterial ribosomal protein bL21 family. Part of the 50S ribosomal subunit. Contacts protein L20.

In terms of biological role, this protein binds to 23S rRNA in the presence of protein L20. This is Large ribosomal subunit protein bL21 from Borrelia garinii subsp. bavariensis (strain ATCC BAA-2496 / DSM 23469 / PBi) (Borreliella bavariensis).